The following is a 328-amino-acid chain: L-asparaginase (328 aa).

The Asparaginase/glutaminase domain maps to 1–320 (MKLLVLGTGG…EEIRKIMERN (320 aa)). Thr11 serves as the catalytic Nucleophile; O-isoaspartyl threonine intermediate. Residues Thr11, Asp53, Ser54, Thr85, and Asp86 each coordinate L-aspartate. Active-site charge relay system residues include Thr85, Asp86, Lys156, and Tyr274.

The protein belongs to the asparaginase 1 family. As to quaternary structure, homodimer.

It catalyses the reaction L-asparagine + H2O = L-aspartate + NH4(+). Chohan et al. found that divalent metal ions and EDTA do not have any significant effect on enzyme activity, indicating that activity is independent of metal ions. In another study, Hong et al. showed that activity is enhanced by Mg(2+), significantly inhibited by Co(2+) and Ni(2+), and moderately inhibited by Ca(2+), Cu(2+) and EDTA. Unfolding studies suggest that urea cannot induce complete unfolding and inactivation of the enzyme even at a concentration 8 M. However, in the presence of 4 M guanidine hydrochloride, the enzyme structure is unfolded with complete loss of enzyme activity. Catalyzes the hydrolysis of L-asparagine into L-aspartate and ammonia. Also displays D-asparaginase activity, which is about 50% of the L-asparaginase activity. Does not exhibit glutaminase activity. This is L-asparaginase from Thermococcus kodakarensis (strain ATCC BAA-918 / JCM 12380 / KOD1) (Pyrococcus kodakaraensis (strain KOD1)).